Here is a 500-residue protein sequence, read N- to C-terminus: L-arabinose isomerase (500 aa).

Glu306, Glu333, His350, and His450 together coordinate Mn(2+).

It belongs to the arabinose isomerase family. As to quaternary structure, homohexamer. It depends on Mn(2+) as a cofactor.

The catalysed reaction is beta-L-arabinopyranose = L-ribulose. It functions in the pathway carbohydrate degradation; L-arabinose degradation via L-ribulose; D-xylulose 5-phosphate from L-arabinose (bacterial route): step 1/3. In terms of biological role, catalyzes the conversion of L-arabinose to L-ribulose. The chain is L-arabinose isomerase from Shigella dysenteriae serotype 1 (strain Sd197).